The sequence spans 905 residues: Stonin-2 (905 aa).

Disordered stretches follow at residues 1-121 (MTTL…HQET), 178-205 (EQTS…VEME), and 244-263 (LPPV…SVIP). The span at 40–50 (SSSPDQSESSS) shows a compositional bias: low complexity. Basic and acidic residues predominate over residues 60 to 73 (SQDHSHSEQDDSSE). Residues 85–94 (PGSPEQPPPD) show a composition bias toward pro residues. A compositionally biased stretch (polar residues) spans 178–196 (EQTSGQASGADSTDNSSSL). Residues 244-256 (LPPVTSPLKPNTP) are compositionally biased toward pro residues. Residue Thr-255 is modified to Phosphothreonine. Residues Ser-281, Ser-287, and Ser-302 each carry the phosphoserine modification. 2 consecutive short sequence motifs (NPF) follow at residues 313–315 (NPF) and 329–331 (NPF). Positions 427-560 (GWPMMLRIPE…DLPVLSMDLS (134 aa)) constitute an SHD domain. The 311-residue stretch at 568 to 878 (EEEITVDVRD…SYQVALGSIW (311 aa)) folds into the MHD domain. Ser-762 is subject to Phosphoserine.

The protein belongs to the Stoned B family. As to quaternary structure, interacts with the second C2 domain of synaptotagmins SYT1 and SYT2. Interacts with EPS15, EPS15R and ITSN1. Interacts indirectly with the AP-2 adapter complex. Interacts with TOR1A and COPS4; the interaction controls STON2 protein stability. In terms of processing, phosphorylated in vitro by PKD. Neddylated; deneddylated via its interaction with the COP9 signalosome (CSN) complex through TOR1A and COPS4. Post-translationally, ubiquitinated; leading to its degradation. As to expression, ubiquitous.

Its subcellular location is the cytoplasm. The protein localises to the membrane. It is found in the synapse. It localises to the synaptosome. In terms of biological role, adapter protein involved in endocytic machinery. Involved in the synaptic vesicle recycling. May facilitate clathrin-coated vesicle uncoating. This Homo sapiens (Human) protein is Stonin-2 (STON2).